The following is a 313-amino-acid chain: Trimeric intracellular cation channel type 1B.2 (313 aa).

At 1–28 (MGWVPDEWSIDHDTLIDAGGYVQKLKLY) the chain is on the lumenal side. A helical membrane pass occupies residues 29-48 (PYFDAAHYVLTCLSVRHDLG). Residues 49–57 (PDAISFSRK) lie on the Cytoplasmic side of the membrane. The discontinuously helical transmembrane segment at 58–82 (HPFSCWLSCMLMSFAGSFLSCFLLG) threads the bilayer. The Lumenal segment spans residues 83-90 (EPIISPLK). Residues 91–108 (QHADILLGSIVWYLVFYS) form a helical membrane-spanning segment. At 109-118 (PFDVVFRLAT) the chain is on the cytoplasmic side. A helical transmembrane segment spans residues 119 to 149 (WFPVKLGLSVLKEVQRTHKIAAGVKHAVRIY). A 1,2-diacyl-sn-glycero-3-phospho-(1D-myo-inositol-4,5-bisphosphate) is bound by residues Lys130 and Arg134. The Lumenal portion of the chain corresponds to 150–151 (PE). A discontinuously helical transmembrane segment spans residues 152 to 178 (SYLVQILVGVAKGAGSGVVKIVEQLAR). Gly168 lines the a 1,2-diacyl-sn-glycero-3-phospho-(1D-myo-inositol-4,5-bisphosphate) pocket. Over 179–192 (GTWHPTNHEILRPS) the chain is Cytoplasmic. A helical transmembrane segment spans residues 193 to 210 (FTTKACVIASIVFTLERH). Over 211-216 (SMYVTA) the chain is Lumenal. The helical transmembrane segment at 217–239 (PHDLVYLCVVGFFIYFKLASLCL) threads the bilayer. Topologically, residues 240–313 (SVHDVLMPIE…MSNGTDKKNN (74 aa)) are cytoplasmic.

Belongs to the TMEM38 family. Homotrimer; trimerization probably requires binding to phosphatidylinositol 4,5-bisphosphate (PIP2).

Its subcellular location is the endoplasmic reticulum membrane. Its function is as follows. Potassium channel that mediates transmembrane potassium transport. Might be required for maintenance of rapid intracellular calcium release. May act as a potassium counter-ion channel that functions in synchronization with calcium release from intracellular stores. Binds phosphatidylinositol 4,5-bisphosphate (PIP2). In Caenorhabditis elegans, this protein is Trimeric intracellular cation channel type 1B.2.